We begin with the raw amino-acid sequence, 541 residues long: Carboxypeptidase Y homolog A (541 aa).

Residues 1–17 form the signal peptide; that stretch reads MKTFTAALLVGTALAAV. A propeptide spanning residues 18–122 is cleaved from the precursor; that stretch reads PQQQPLQTQV…KLENYDLRVK (105 aa). 5 disulfides stabilise this stretch: Cys-177–Cys-416, Cys-311–Cys-325, Cys-335–Cys-358, Cys-342–Cys-351, and Cys-380–Cys-386. Asn-208 is a glycosylation site (N-linked (GlcNAc...) asparagine). Ser-264 is an active-site residue. Residue Asp-455 is part of the active site. Residues Asn-485, Asn-491, and Asn-506 are each glycosylated (N-linked (GlcNAc...) asparagine). His-517 is an active-site residue.

This sequence belongs to the peptidase S10 family.

The protein localises to the vacuole. It carries out the reaction Release of a C-terminal amino acid with broad specificity.. In terms of biological role, vacuolar carboxypeptidase involved in degradation of small peptides. Digests preferentially peptides containing an aliphatic or hydrophobic residue in P1' position, as well as methionine, leucine or phenylalanine in P1 position of ester substrate. In Uncinocarpus reesii (strain UAMH 1704), this protein is Carboxypeptidase Y homolog A (cpyA).